A 628-amino-acid polypeptide reads, in one-letter code: U-box domain-containing protein 10 (628 aa).

Residues 242–316 (TIPEDFLCPI…SQWCTKHNIE (75 aa)) form the U-box domain. ARM repeat units lie at residues 373-413 (TDNR…NLSI), 415-454 (EHNKELIMLAGAVTSIVLVLRAGSMEARENAAATLFSLSL), 456-495 (DENKIIIGASGAIMALVDLLQYGSVRGKKDAATALFNLCI), 497-537 (QGNK…VLAS), and 539-578 (QVAKTAILRANAIPPLIDCLQKDQPRNRENAAAILLCLCK).

The enzyme catalyses S-ubiquitinyl-[E2 ubiquitin-conjugating enzyme]-L-cysteine + [acceptor protein]-L-lysine = [E2 ubiquitin-conjugating enzyme]-L-cysteine + N(6)-ubiquitinyl-[acceptor protein]-L-lysine.. It participates in protein modification; protein ubiquitination. In terms of biological role, functions as an E3 ubiquitin ligase. The chain is U-box domain-containing protein 10 (PUB10) from Arabidopsis thaliana (Mouse-ear cress).